The sequence spans 548 residues: Chaperonin GroEL (548 aa).

ATP-binding positions include 30–33 (TLGP), K51, 87–91 (DGTTT), G415, 479–481 (NAA), and D495.

It belongs to the chaperonin (HSP60) family. Forms a cylinder of 14 subunits composed of two heptameric rings stacked back-to-back. Interacts with the co-chaperonin GroES.

It is found in the cytoplasm. The catalysed reaction is ATP + H2O + a folded polypeptide = ADP + phosphate + an unfolded polypeptide.. Its function is as follows. Together with its co-chaperonin GroES, plays an essential role in assisting protein folding. The GroEL-GroES system forms a nano-cage that allows encapsulation of the non-native substrate proteins and provides a physical environment optimized to promote and accelerate protein folding. This Nitratidesulfovibrio vulgaris (strain DSM 19637 / Miyazaki F) (Desulfovibrio vulgaris) protein is Chaperonin GroEL.